The chain runs to 432 residues: Calcium uptake protein 2, mitochondrial (432 aa).

The N-terminal 22 residues, 1-22 (MAAAAGRSAWLAAWGGRLRRGL), are a transit peptide targeting the mitochondrion. An EF-hand 1 domain is found at 169–204 (KPHSGFHVAFKMLDVDGNEMIERKEFVRLQKIISKQ). The Ca(2+) site is built by D182, D184, N186, M188, E190, and E193. Residue S202 is modified to Phosphoserine. The EF-hand 2; degenerate domain occupies 224–259 (EPGVNTTLQVRFFGKRGEKKLHYKEFRRFVENLQTE). The region spanning 290–325 (TENKDIYWRNVREKLSVGESISLDEFKSFCHFTTHL) is the EF-hand 3; degenerate domain. An EF-hand 4 domain is found at 359-394 (LSDNLLDTVFKIFDLDGDECLSHGEFLGVLKNRMHR). Ca(2+)-binding residues include D372, D374, D376, C378, and E383.

The protein belongs to the MICU1 family. MICU2 subfamily. In terms of assembly, heterodimer; disulfide-linked; heterodimerizes with MICU1. Component of the uniplex complex, composed of MCU, EMRE/SMDT1, MICU1 and MICU2 in a 4:4:1:1 stoichiometry.

The protein resides in the mitochondrion intermembrane space. It localises to the mitochondrion inner membrane. Functionally, calcium sensor of the mitochondrial calcium uniporter (MCU) channel, which senses calcium level via its EF-hand domains. MICU1 and MICU2 form a disulfide-linked heterodimer that stimulates and inhibits MCU activity, depending on the concentration of calcium. At low calcium levels, MICU1 occludes the pore of the MCU channel, preventing mitochondrial calcium uptake. At higher calcium levels, calcium-binding to MICU1 and MICU2 induces a conformational change that weakens MCU-MICU1 interactions and moves the MICU1-MICU2 heterodimer away from the pore, allowing calcium permeation through the MCU channel. The sequence is that of Calcium uptake protein 2, mitochondrial (Micu2) from Rattus norvegicus (Rat).